We begin with the raw amino-acid sequence, 286 residues long: ATP synthase gamma chain (286 aa).

The protein belongs to the ATPase gamma chain family. F-type ATPases have 2 components, CF(1) - the catalytic core - and CF(0) - the membrane proton channel. CF(1) has five subunits: alpha(3), beta(3), gamma(1), delta(1), epsilon(1). CF(0) has three main subunits: a, b and c.

The protein localises to the cell membrane. In terms of biological role, produces ATP from ADP in the presence of a proton gradient across the membrane. The gamma chain is believed to be important in regulating ATPase activity and the flow of protons through the CF(0) complex. The chain is ATP synthase gamma chain from Ruminococcus albus (strain ATCC 27210 / DSM 20455 / JCM 14654 / NCDO 2250 / 7).